The following is a 444-amino-acid chain: Chromosome partition protein MukF (444 aa).

A leucine-zipper region spans residues 212–240 (LDETSGNLRELQDTLNAAGDKLQAQLLRI).

It belongs to the MukF family. As to quaternary structure, interacts, and probably forms a ternary complex, with MukE and MukB via its C-terminal region. The complex formation is stimulated by calcium or magnesium. It is required for an interaction between MukE and MukB.

The protein resides in the cytoplasm. It localises to the nucleoid. Its function is as follows. Involved in chromosome condensation, segregation and cell cycle progression. May participate in facilitating chromosome segregation by condensation DNA from both sides of a centrally located replisome during cell division. Not required for mini-F plasmid partitioning. Probably acts via its interaction with MukB and MukE. Overexpression results in anucleate cells. It has a calcium binding activity. The chain is Chromosome partition protein MukF from Haemophilus influenzae (strain ATCC 51907 / DSM 11121 / KW20 / Rd).